The sequence spans 704 residues: Elongation factor G (704 aa).

In terms of domain architecture, tr-type G spans 10-290 (KKVRNIGIMA…AVVDYLPSPL (281 aa)). GTP contacts are provided by residues 19–26 (AHIDAGKT), 83–87 (DTPGH), and 137–140 (NKMD).

The protein belongs to the TRAFAC class translation factor GTPase superfamily. Classic translation factor GTPase family. EF-G/EF-2 subfamily.

Its subcellular location is the cytoplasm. Catalyzes the GTP-dependent ribosomal translocation step during translation elongation. During this step, the ribosome changes from the pre-translocational (PRE) to the post-translocational (POST) state as the newly formed A-site-bound peptidyl-tRNA and P-site-bound deacylated tRNA move to the P and E sites, respectively. Catalyzes the coordinated movement of the two tRNA molecules, the mRNA and conformational changes in the ribosome. The chain is Elongation factor G from Kocuria rhizophila (strain ATCC 9341 / DSM 348 / NBRC 103217 / DC2201).